A 217-amino-acid chain; its full sequence is Non-structural protein NS3 (217 aa).

It belongs to the orbivirus NS3 family.

May play a role in the release of virions from infected cells. The polypeptide is Non-structural protein NS3 (Segment-10) (African horse sickness virus 6 (AHSV-6)).